A 359-amino-acid polypeptide reads, in one-letter code: uncharacterized protein (359 aa).

Residue 46–53 (GPKSSGKS) participates in ATP binding.

This sequence belongs to the archaeal ATPase family.

This is an uncharacterized protein from Methanocaldococcus jannaschii (strain ATCC 43067 / DSM 2661 / JAL-1 / JCM 10045 / NBRC 100440) (Methanococcus jannaschii).